A 588-amino-acid polypeptide reads, in one-letter code: Adenine deaminase (588 aa).

Belongs to the metallo-dependent hydrolases superfamily. Adenine deaminase family. In terms of assembly, homodimer. Requires Mn(2+) as cofactor.

The enzyme catalyses adenine + H2O + H(+) = hypoxanthine + NH4(+). This Escherichia coli (strain 55989 / EAEC) protein is Adenine deaminase.